Consider the following 181-residue polypeptide: Adenine phosphoribosyltransferase (181 aa).

The protein belongs to the purine/pyrimidine phosphoribosyltransferase family. In terms of assembly, homodimer.

It localises to the cytoplasm. The catalysed reaction is AMP + diphosphate = 5-phospho-alpha-D-ribose 1-diphosphate + adenine. Its pathway is purine metabolism; AMP biosynthesis via salvage pathway; AMP from adenine: step 1/1. Its function is as follows. Catalyzes a salvage reaction resulting in the formation of AMP, that is energically less costly than de novo synthesis. This Methylorubrum populi (strain ATCC BAA-705 / NCIMB 13946 / BJ001) (Methylobacterium populi) protein is Adenine phosphoribosyltransferase.